Reading from the N-terminus, the 127-residue chain is Mediator of RNA polymerase II transcription subunit 9 (127 aa).

Positions 95 to 119 (QKEQEIEAKKRVHRQLRQRVEEIAG) form a coiled coil.

The protein belongs to the Mediator complex subunit 9 family. Component of the Mediator complex.

It localises to the nucleus. Component of the Mediator complex, a coactivator involved in the regulated transcription of nearly all RNA polymerase II-dependent genes. Mediator functions as a bridge to convey information from gene-specific regulatory proteins to the basal RNA polymerase II transcription machinery. Mediator is recruited to promoters by direct interactions with regulatory proteins and serves as a scaffold for the assembly of a functional preinitiation complex with RNA polymerase II and the general transcription factors. The polypeptide is Mediator of RNA polymerase II transcription subunit 9 (CSE2) (Eremothecium gossypii (strain ATCC 10895 / CBS 109.51 / FGSC 9923 / NRRL Y-1056) (Yeast)).